A 446-amino-acid polypeptide reads, in one-letter code: Alpha-1,6-mannosyl-glycoprotein 2-beta-N-acetylglucosaminyltransferase (446 aa).

Over 1 to 9 (MRFRIYKRK) the chain is Cytoplasmic. Residues 10 to 29 (VLILTFVVAACGFVLWSSNG) form a helical; Signal-anchor for type II membrane protein membrane-spanning segment. Over 30 to 446 (RQRKNEALAP…ELCKSYRRLQ (417 aa)) the chain is Lumenal. 2 N-linked (GlcNAc...) asparagine glycosylation sites follow: N69 and N86. Substrate contacts are provided by residues 123–127 (QVHNR) and D154. C196 and C210 are disulfide-bonded. 229–233 (QTKHH) lines the substrate pocket. D261 provides a ligand contact to Mn(2+). C283 and C286 are oxidised to a cystine. R298 contributes to the substrate binding site. Cystine bridges form between C334-C357, C339-C439, and C378-C386. A Mn(2+)-binding site is contributed by H374.

This sequence belongs to the glycosyltransferase 16 (GT16) protein family. As to quaternary structure, homodimer. The cofactor is Mn(2+).

It is found in the golgi apparatus membrane. It catalyses the reaction an N(4)-{beta-D-GlcNAc-(1-&gt;2)-alpha-D-Man-(1-&gt;3)-[alpha-D-Man-(1-&gt;6)]-beta-D-Man-(1-&gt;4)-beta-D-GlcNAc-(1-&gt;4)-beta-D-GlcNAc}-L-asparaginyl-[protein] + UDP-N-acetyl-alpha-D-glucosamine = N(4)-{beta-D-GlcNAc-(1-&gt;2)-alpha-D-Man-(1-&gt;3)-[beta-D-GlcNAc-(1-&gt;2)-alpha-D-Man-(1-&gt;6)]-beta-D-Man-(1-&gt;4)-beta-D-GlcNAc-(1-&gt;4)-beta-D-GlcNAc}-L-asparaginyl-[protein] + UDP + H(+). The protein operates within protein modification; protein glycosylation. In terms of biological role, plays an essential role in protein N-glycosylation. Catalyzes the transfer of N-acetylglucosamine (GlcNAc) onto the free terminal mannose moiety in the core structure of the nascent N-linked glycan chain, giving rise to the second branch in complex glycans. The sequence is that of Alpha-1,6-mannosyl-glycoprotein 2-beta-N-acetylglucosaminyltransferase (MGAT2) from Sus scrofa (Pig).